Reading from the N-terminus, the 383-residue chain is Erythronate-4-phosphate dehydrogenase (383 aa).

The substrate site is built by Ser45 and Thr66. Residues Asp146 and Thr175 each coordinate NAD(+). Arg208 is an active-site residue. Asp232 serves as a coordination point for NAD(+). Residue Glu237 is part of the active site. His254 serves as the catalytic Proton donor. NAD(+) is bound at residue Gly257.

It belongs to the D-isomer specific 2-hydroxyacid dehydrogenase family. PdxB subfamily. Homodimer.

Its subcellular location is the cytoplasm. The catalysed reaction is 4-phospho-D-erythronate + NAD(+) = (R)-3-hydroxy-2-oxo-4-phosphooxybutanoate + NADH + H(+). It participates in cofactor biosynthesis; pyridoxine 5'-phosphate biosynthesis; pyridoxine 5'-phosphate from D-erythrose 4-phosphate: step 2/5. Functionally, catalyzes the oxidation of erythronate-4-phosphate to 3-hydroxy-2-oxo-4-phosphonooxybutanoate. This Chromohalobacter salexigens (strain ATCC BAA-138 / DSM 3043 / CIP 106854 / NCIMB 13768 / 1H11) protein is Erythronate-4-phosphate dehydrogenase.